The following is a 301-amino-acid chain: Thiosulfate sulfurtransferase (301 aa).

Rhodanese domains lie at Gly-31–Tyr-138 and Gln-171–Glu-289. The active-site Cysteine persulfide intermediate is Cys-248. Arg-253 is a binding site for substrate.

The catalysed reaction is thiosulfate + hydrogen cyanide = thiocyanate + sulfite + 2 H(+). This chain is Thiosulfate sulfurtransferase (thtR), found in Corynebacterium glutamicum (strain ATCC 13032 / DSM 20300 / JCM 1318 / BCRC 11384 / CCUG 27702 / LMG 3730 / NBRC 12168 / NCIMB 10025 / NRRL B-2784 / 534).